A 300-amino-acid polypeptide reads, in one-letter code: Quinolinate synthase (300 aa).

Iminosuccinate-binding residues include His-21 and Ser-38. [4Fe-4S] cluster is bound at residue Cys-83. Iminosuccinate-binding positions include 109–111 and Ser-126; that span reads YVN. Residue Cys-170 coordinates [4Fe-4S] cluster. Iminosuccinate is bound by residues 196–198 and Thr-213; that span reads HPE. Cys-256 is a binding site for [4Fe-4S] cluster.

It belongs to the quinolinate synthase family. Type 2 subfamily. In terms of assembly, monomer. Homodimer. [4Fe-4S] cluster serves as cofactor.

The protein localises to the cytoplasm. The enzyme catalyses iminosuccinate + dihydroxyacetone phosphate = quinolinate + phosphate + 2 H2O + H(+). It functions in the pathway cofactor biosynthesis; NAD(+) biosynthesis; quinolinate from iminoaspartate: step 1/1. In terms of biological role, catalyzes the condensation of iminoaspartate with dihydroxyacetone phosphate to form quinolinate. In Pyrococcus horikoshii (strain ATCC 700860 / DSM 12428 / JCM 9974 / NBRC 100139 / OT-3), this protein is Quinolinate synthase.